The chain runs to 69 residues: MGMALELYWLCGFRSYWPLGTNAENEGNRKENRRQMQSRNERGCNVRQTKTYRDREADRHIHGIACLLF.

A disordered region spans residues 23 to 46 (AENEGNRKENRRQMQSRNERGCNV). A compositionally biased stretch (basic and acidic residues) spans 26–44 (EGNRKENRRQMQSRNERGC).

This is an uncharacterized protein from Homo sapiens (Human).